A 513-amino-acid polypeptide reads, in one-letter code: ATP synthase subunit alpha (513 aa).

Glycine 169–threonine 176 contributes to the ATP binding site.

It belongs to the ATPase alpha/beta chains family. As to quaternary structure, F-type ATPases have 2 components, CF(1) - the catalytic core - and CF(0) - the membrane proton channel. CF(1) has five subunits: alpha(3), beta(3), gamma(1), delta(1), epsilon(1). CF(0) has three main subunits: a(1), b(2) and c(9-12). The alpha and beta chains form an alternating ring which encloses part of the gamma chain. CF(1) is attached to CF(0) by a central stalk formed by the gamma and epsilon chains, while a peripheral stalk is formed by the delta and b chains.

The protein resides in the cell inner membrane. It carries out the reaction ATP + H2O + 4 H(+)(in) = ADP + phosphate + 5 H(+)(out). In terms of biological role, produces ATP from ADP in the presence of a proton gradient across the membrane. The alpha chain is a regulatory subunit. The sequence is that of ATP synthase subunit alpha from Burkholderia cenocepacia (strain ATCC BAA-245 / DSM 16553 / LMG 16656 / NCTC 13227 / J2315 / CF5610) (Burkholderia cepacia (strain J2315)).